Reading from the N-terminus, the 199-residue chain is Pneumococcal vaccine antigen A homolog (199 aa).

Its subcellular location is the cell surface. In Streptococcus pyogenes serotype M1, this protein is Pneumococcal vaccine antigen A homolog (pvaA).